A 204-amino-acid chain; its full sequence is Factor arrest protein 3 (204 aa).

As to quaternary structure, component of a complex at least composed of FAR3, FAR7, FAR8, FAR10, FAR11 and VPS64.

The protein resides in the endoplasmic reticulum. Functionally, participates in the control of the reentry into the cell cycle following pheromone treatment. This chain is Factor arrest protein 3 (FAR3), found in Saccharomyces cerevisiae (strain ATCC 204508 / S288c) (Baker's yeast).